The primary structure comprises 309 residues: Ribosomal protein L11 methyltransferase (309 aa).

Residues Thr152, Gly178, Asp200, and Asn242 each contribute to the S-adenosyl-L-methionine site.

This sequence belongs to the methyltransferase superfamily. PrmA family.

The protein resides in the cytoplasm. The catalysed reaction is L-lysyl-[protein] + 3 S-adenosyl-L-methionine = N(6),N(6),N(6)-trimethyl-L-lysyl-[protein] + 3 S-adenosyl-L-homocysteine + 3 H(+). In terms of biological role, methylates ribosomal protein L11. This is Ribosomal protein L11 methyltransferase from Pelobacter propionicus (strain DSM 2379 / NBRC 103807 / OttBd1).